The following is a 473-amino-acid chain: GTPase Der (473 aa).

2 consecutive EngA-type G domains span residues 5–170 and 178–351; these read PVVA…PEDV and LKLA…ASSM. GTP-binding positions include 11 to 18, 58 to 62, 123 to 126, 184 to 191, 231 to 235, and 296 to 299; these read GRPNVGKS, DTGGI, NKID, DTAGV, and NKWD. In terms of domain architecture, KH-like spans 352–436; sequence FKVSTNRLTQ…PLKVEFKLNT (85 aa). A disordered region spans residues 438 to 473; sequence PYAGKKTTSSKKLRPGVSEARQKRRNMKYKKGSHKK. The segment covering 459-473 has biased composition (basic residues); that stretch reads QKRRNMKYKKGSHKK.

The protein belongs to the TRAFAC class TrmE-Era-EngA-EngB-Septin-like GTPase superfamily. EngA (Der) GTPase family. In terms of assembly, associates with the 50S ribosomal subunit.

Functionally, GTPase that plays an essential role in the late steps of ribosome biogenesis. This Psychrobacter sp. (strain PRwf-1) protein is GTPase Der.